The sequence spans 247 residues: Ribonuclease PH (247 aa).

Phosphate is bound by residues Arg96 and 134–136 (GTR).

Belongs to the RNase PH family. As to quaternary structure, homohexameric ring arranged as a trimer of dimers.

It carries out the reaction tRNA(n+1) + phosphate = tRNA(n) + a ribonucleoside 5'-diphosphate. Its function is as follows. Phosphorolytic 3'-5' exoribonuclease that plays an important role in tRNA 3'-end maturation. Removes nucleotide residues following the 3'-CCA terminus of tRNAs; can also add nucleotides to the ends of RNA molecules by using nucleoside diphosphates as substrates, but this may not be physiologically important. Probably plays a role in initiation of 16S rRNA degradation (leading to ribosome degradation) during starvation. The chain is Ribonuclease PH from Tropheryma whipplei (strain TW08/27) (Whipple's bacillus).